The chain runs to 489 residues: Ubiquitin-like-specific protease ESD4 (489 aa).

Positions 43–66 (AMSEDSGKPASSNPTISRISRYPD) are disordered. Residues 51–60 (PASSNPTISR) show a composition bias toward polar residues. A coiled-coil region spans residues 200–223 (ASSLEAYRKLMQSAEKRNSKLEAL). Active-site residues include H380, D397, and C448.

Belongs to the peptidase C48 family. As to quaternary structure, interacts with NUA (via N-terminus). Interacts with KIN10. Expressed in seedlings, leaves, shoots, flowers and roots.

The protein localises to the nucleus membrane. The catalysed reaction is Hydrolysis of the alpha-linked peptide bond in the sequence Gly-Gly-|-Ala-Thr-Tyr at the C-terminal end of the small ubiquitin-like modifier (SUMO) propeptide, Smt3, leading to the mature form of the protein. A second reaction involves the cleavage of an epsilon-linked peptide bond between the C-terminal glycine of the mature SUMO and the lysine epsilon-amino group of the target protein.. With respect to regulation, inhibited by thiol reagent and N-ethylmaleimide, but not by ubiquitin aldehyde, pepstatin A or benzamidine HCl. Functionally, protease that catalyzes two essential functions in the SUMO pathway: processing of full-length SUMOs to their mature forms and deconjugation of SUMO from targeted proteins. Cleaves precursors of SUM1 and SUM2, but not of SUM3 or SUM5. Able to release SUM1 and SUM2 from conjugates, but unable to cleave SUM3. Acts predominantly as an isopeptidase, cleaving SUMO-conjugated proteins better than SUMO peptides. Plays an important role in the control of flowering time. The chain is Ubiquitin-like-specific protease ESD4 (ESD4) from Arabidopsis thaliana (Mouse-ear cress).